The following is a 397-amino-acid chain: 2-acyl-1-lysophosphatidylinositol acyltransferase (397 aa).

The HXXXXD motif motif lies at histidine 112–aspartate 117.

Belongs to the 1-acyl-sn-glycerol-3-phosphate acyltransferase family.

It localises to the lipid droplet. The catalysed reaction is 1-heptadecanoyl-sn-glycero-3-phosphate + octadecanoyl-CoA = 1-heptadecanoyl-2-octadecanoyl-sn-glycero-3-phosphate + CoA. The enzyme catalyses 1-heptadecanoyl-sn-glycero-3-phosphate + tetradecanoyl-CoA = 1-heptadecanoyl-2-tetradecanoyl-sn-glycero-3-phosphate + CoA. It catalyses the reaction 1-heptadecanoyl-sn-glycero-3-phosphate + hexadecanoyl-CoA = 1-heptadecanoyl-2-hexadecanoyl-sn-glycero-3-phosphate + CoA. Functionally, acyltransferase with lysophosphatidic acid acyltransferase (LPAAT) activity. Fatty acyl substrates include 18:0-acyl-CoA, 16:0-acyl-CoA, 17:0-acyl-CoA and 14:0-acyl-CoA. Responsible for the acyl-CoA-dependent introduction of saturated very long chain fatty acids (VLCFAs) into phosphatidylinositol, transferring saturated FAs with 18 to 26 carbon atoms. Responsible for the incorporation of stearate into phosphatidylinositol. Overexpression has an effect on chromosome stability. Regulates phosphorylation and expression of glycerol-3-phosphate acyltransferase SCT1. In Saccharomyces cerevisiae (strain ATCC 204508 / S288c) (Baker's yeast), this protein is 2-acyl-1-lysophosphatidylinositol acyltransferase.